The following is a 741-amino-acid chain: Alpha-1,6-mannosylglycoprotein 6-beta-N-acetylglucosaminyltransferase A (741 aa).

Topologically, residues 1–13 (MALFTPWKLSSQK) are cytoplasmic. Residues 14–30 (LGFFLVTFGFIWGMMLL) form a helical; Signal-anchor for type II membrane protein membrane-spanning segment. Topologically, residues 31 to 741 (HFTIQQRTQP…GQVALCKDCL (711 aa)) are lumenal. Residues asparagine 110, asparagine 115, and asparagine 118 are each glycosylated (N-linked (GlcNAc...) asparagine). 9 cysteine pairs are disulfide-bonded: cysteine 145/cysteine 183, cysteine 156/cysteine 196, cysteine 172/cysteine 338, cysteine 372/cysteine 626, cysteine 649/cysteine 724, cysteine 653/cysteine 726, cysteine 660/cysteine 713, cysteine 681/cysteine 702, and cysteine 737/cysteine 740. The interval 213–741 (NSLAEIRTDF…GQVALCKDCL (529 aa)) is sufficient for catalytic activity. Positions 264 to 269 (KRKRKK) are important for activity in FGF2 release. Asparagine 334 is a glycosylation site (N-linked (GlcNAc...) asparagine). 378 to 379 (DS) is a binding site for substrate. 2 N-linked (GlcNAc...) asparagine glycosylation sites follow: asparagine 433 and asparagine 447. Glutamate 526 serves as a coordination point for UDP-N-acetyl-alpha-D-glucosamine. Lysine 554 contacts substrate.

Belongs to the glycosyltransferase 18 family. In terms of processing, N-glycosylated. Post-translationally, a secreted form is released from the membrane after cleavage by gamma-secretase.

The protein localises to the golgi apparatus membrane. Its subcellular location is the secreted. It carries out the reaction N(4)-{beta-D-GlcNAc-(1-&gt;2)-[beta-D-GlcNAc-(1-&gt;4)]-alpha-D-Man-(1-&gt;3)-[beta-D-GlcNAc-(1-&gt;2)-alpha-D-Man-(1-&gt;6)]-beta-D-Man-(1-&gt;4)-beta-D-GlcNAc-(1-&gt;4)-beta-D-GlcNAc}-L-asparaginyl-[protein] + UDP-N-acetyl-alpha-D-glucosamine = N(4)-{beta-D-GlcNAc-(1-&gt;2)-[beta-D-GlcNAc-(1-&gt;4)]-alpha-D-Man-(1-&gt;3)-[beta-D-GlcNAc-(1-&gt;2)-[beta-D-GlcNAc-(1-&gt;6)]-alpha-D-Man-(1-&gt;6)]-beta-D-Man-(1-&gt;4)-beta-D-GlcNAc-(1-&gt;4)-beta-D-GlcNAc}-L-asparaginyl-[protein] + UDP + H(+). The protein operates within protein modification; protein glycosylation. Activity is increased by Mn(2+) and Mg(2+). In terms of biological role, catalyzes the addition of N-acetylglucosamine (GlcNAc) in beta 1-6 linkage to the alpha-linked mannose of biantennary N-linked oligosaccharides. Catalyzes an important step in the biosynthesis of branched, complex-type N-glycans, such as those found on EGFR, TGFR (TGF-beta receptor) and CDH2. Via its role in the biosynthesis of complex N-glycans, plays an important role in the activation of cellular signaling pathways, reorganization of the actin cytoskeleton, cell-cell adhesion and cell migration. MGAT5-dependent EGFR N-glycosylation enhances the interaction between EGFR and LGALS3 and thereby prevents rapid EGFR endocytosis and prolongs EGFR signaling. Required for efficient interaction between TGFB1 and its receptor. Enhances activation of intracellular signaling pathways by several types of growth factors, including FGF2, PDGF, IGF, TGFB1 and EGF. MGAT5-dependent CDH2 N-glycosylation inhibits CDH2-mediated homotypic cell-cell adhesion and contributes to the regulation of downstream signaling pathways. Promotes cell migration. Contributes to the regulation of the inflammatory response. MGAT5-dependent TCR N-glycosylation enhances the interaction between TCR and LGALS3, limits agonist-induced TCR clustering, and thereby dampens TCR-mediated responses to antigens. Required for normal leukocyte evasation and accumulation at sites of inflammation. Inhibits attachment of monocytes to the vascular endothelium and subsequent monocyte diapedesis. Functionally, promotes proliferation of umbilical vein endothelial cells and angiogenesis, at least in part by promoting the release of the growth factor FGF2 from the extracellular matrix. The protein is Alpha-1,6-mannosylglycoprotein 6-beta-N-acetylglucosaminyltransferase A (MGAT5) of Homo sapiens (Human).